We begin with the raw amino-acid sequence, 186 residues long: GMP synthase [glutamine-hydrolyzing] subunit A (186 aa).

In terms of domain architecture, Glutamine amidotransferase type-1 spans 2–186 (SIVIINNFGQ…ENFNKICENY (185 aa)). Cys-76 serves as the catalytic Nucleophile. Active-site residues include His-163 and Glu-165.

As to quaternary structure, heterodimer composed of a glutamine amidotransferase subunit (A) and a GMP-binding subunit (B).

The enzyme catalyses XMP + L-glutamine + ATP + H2O = GMP + L-glutamate + AMP + diphosphate + 2 H(+). It functions in the pathway purine metabolism; GMP biosynthesis; GMP from XMP (L-Gln route): step 1/1. Its function is as follows. Catalyzes the synthesis of GMP from XMP. The protein is GMP synthase [glutamine-hydrolyzing] subunit A of Methanosphaera stadtmanae (strain ATCC 43021 / DSM 3091 / JCM 11832 / MCB-3).